The following is a 61-amino-acid chain: MKILLAALTSSFMLVGCTPRIEVAAPKEPITINMNVKIEHEIIIKADKDVEELLETRSDLF.

The first 16 residues, 1-16 (MKILLAALTSSFMLVG), serve as a signal peptide directing secretion. Residue Cys-17 is the site of N-palmitoyl cysteine attachment. The S-diacylglycerol cysteine moiety is linked to residue Cys-17.

The protein belongs to the lipoprotein YnbE family. As to quaternary structure, interacts with the C-terminal region of the probable phospholipid transport protein YdbH.

It is found in the cell outer membrane. In terms of biological role, involved in outer membrane lipid homeostasis. Interacts with the inner membrane protein YdbH to form a functional protein bridge connecting the inner and outer membranes of the cell. Is required for YdbH's function and may facilitate phospholipid transport through the periplasm. This Escherichia coli O6:H1 (strain CFT073 / ATCC 700928 / UPEC) protein is Outer membrane lipoprotein YnbE (ynbE).